Reading from the N-terminus, the 118-residue chain is Holo-[acyl-carrier-protein] synthase (118 aa).

Mg(2+) is bound by residues Asp5 and Glu50.

The protein belongs to the P-Pant transferase superfamily. AcpS family. Mg(2+) serves as cofactor.

The protein localises to the cytoplasm. The catalysed reaction is apo-[ACP] + CoA = holo-[ACP] + adenosine 3',5'-bisphosphate + H(+). In terms of biological role, transfers the 4'-phosphopantetheine moiety from coenzyme A to a Ser of acyl-carrier-protein. The protein is Holo-[acyl-carrier-protein] synthase of Aliarcobacter butzleri (strain RM4018) (Arcobacter butzleri).